Consider the following 646-residue polypeptide: Threonine--tRNA ligase (646 aa).

The region spanning 1–63 (MAQISLTFPD…EADAKIAIHT (63 aa)) is the TGS domain. The tract at residues 247–544 (DHRKLGKEME…LIENYAGKLP (298 aa)) is catalytic. Cys-344, His-395, and His-521 together coordinate Zn(2+).

This sequence belongs to the class-II aminoacyl-tRNA synthetase family. Homodimer. It depends on Zn(2+) as a cofactor.

The protein localises to the cytoplasm. It carries out the reaction tRNA(Thr) + L-threonine + ATP = L-threonyl-tRNA(Thr) + AMP + diphosphate + H(+). In terms of biological role, catalyzes the attachment of threonine to tRNA(Thr) in a two-step reaction: L-threonine is first activated by ATP to form Thr-AMP and then transferred to the acceptor end of tRNA(Thr). Also edits incorrectly charged L-seryl-tRNA(Thr). This chain is Threonine--tRNA ligase, found in Cereibacter sphaeroides (strain ATCC 17025 / ATH 2.4.3) (Rhodobacter sphaeroides).